Reading from the N-terminus, the 434-residue chain is MFS-type transporter AFUA_1G00970 (434 aa).

The next 12 membrane-spanning stretches (helical) occupy residues 21-41, 60-80, 87-107, 112-132, 145-165, 182-202, 240-260, 278-298, 301-321, 327-347, 364-384, and 393-413; these read VIGGTCALLCTVGFVVAFGVF, WIGSASIFLLYVSAPICGVLV, VLLIAGSIGVLVAIFMISLCS, IFLAQAVLLGISMGFVTWPPF, LALGVITGGSSVGGIVWSIMI, VLGFTMLPLLAFACISITEPP, VFISICVGFGLAFLGLFNPFF, YMISIMNAATLFGRVIPGIVA, VGHYNVMIFVLLASGITSFCW, LTGLVIWSIAYGFSSGAILSL, AIGFLQGSLAVTVLVGSPIGG, and LSLSMFTGATLVMGAVVMGYA. The segment at 201–225 is disordered; that stretch reads PPKQSQPQPRPALEATVEGGSASPT.

Belongs to the major facilitator superfamily. Monocarboxylate porter (TC 2.A.1.13) family.

The protein localises to the cell membrane. In terms of biological role, MFS-type transporter; part of the gene cluster that mediates the biosynthesis of fumigermin that inhibits germination of spores of the inducing S.rapamycinicus, and thus helps the fungus to defend resources in the shared habitat against a bacterial competitor. May be involved in the secretion of fumigermin. In Aspergillus fumigatus (strain ATCC MYA-4609 / CBS 101355 / FGSC A1100 / Af293) (Neosartorya fumigata), this protein is MFS-type transporter AFUA_1G00970.